The sequence spans 181 residues: Acireductone dioxygenase (181 aa).

His97, His99, Glu103, and His141 together coordinate Fe(2+). The Ni(2+) site is built by His97, His99, Glu103, and His141.

This sequence belongs to the acireductone dioxygenase (ARD) family. As to quaternary structure, monomer. The cofactor is Fe(2+). Requires Ni(2+) as cofactor.

It carries out the reaction 1,2-dihydroxy-5-(methylsulfanyl)pent-1-en-3-one + O2 = 3-(methylsulfanyl)propanoate + CO + formate + 2 H(+). It catalyses the reaction 1,2-dihydroxy-5-(methylsulfanyl)pent-1-en-3-one + O2 = 4-methylsulfanyl-2-oxobutanoate + formate + 2 H(+). Its pathway is amino-acid biosynthesis; L-methionine biosynthesis via salvage pathway; L-methionine from S-methyl-5-thio-alpha-D-ribose 1-phosphate: step 5/6. In terms of biological role, catalyzes 2 different reactions between oxygen and the acireductone 1,2-dihydroxy-3-keto-5-methylthiopentene (DHK-MTPene) depending upon the metal bound in the active site. Fe-containing acireductone dioxygenase (Fe-ARD) produces formate and 2-keto-4-methylthiobutyrate (KMTB), the alpha-ketoacid precursor of methionine in the methionine recycle pathway. Ni-containing acireductone dioxygenase (Ni-ARD) produces methylthiopropionate, carbon monoxide and formate, and does not lie on the methionine recycle pathway. The protein is Acireductone dioxygenase of Stutzerimonas stutzeri (strain A1501) (Pseudomonas stutzeri).